A 313-amino-acid chain; its full sequence is Protein sprouty homolog 1 (313 aa).

N-acetylmethionine is present on Met-1. A disordered region spans residues 43–152 (QIKAIRGSNE…RSDRVIRTQP (110 aa)). Positions 69-79 (PRPEKQERTHE) are enriched in basic and acidic residues. Low complexity predominate over residues 106–125 (SRSTSTGSAASSGSSSSVSS). The 113-residue stretch at 177 to 289 (QCGKCKCGEC…CYDWTHRPGC (113 aa)) folds into the SPR domain.

Belongs to the sprouty family. Forms heterodimers with SPRY2. Interacts with TESK1. Interacts with CAV1 (via C-terminus).

It is found in the cytoplasm. The protein localises to the membrane. Its function is as follows. Inhibits fibroblast growth factor (FGF)-induced retinal lens fiber differentiation, probably by inhibiting FGF-mediated phosphorylation of ERK1/2. Inhibits TGFB-induced epithelial-to-mesenchymal transition in lens epithelial cells. The protein is Protein sprouty homolog 1 (Spry1) of Mus musculus (Mouse).